The chain runs to 187 residues: Nucleoside-triphosphatase THEP1 (187 aa).

ATP contacts are provided by residues Gly9–Thr16 and Leu100–Gly107.

This sequence belongs to the THEP1 NTPase family.

The enzyme catalyses a ribonucleoside 5'-triphosphate + H2O = a ribonucleoside 5'-diphosphate + phosphate + H(+). Has nucleotide phosphatase activity towards ATP, GTP, CTP, TTP and UTP. May hydrolyze nucleoside diphosphates with lower efficiency. This is Nucleoside-triphosphatase THEP1 from Hyperthermus butylicus (strain DSM 5456 / JCM 9403 / PLM1-5).